A 446-amino-acid polypeptide reads, in one-letter code: Adenylosuccinate synthetase (446 aa).

GTP is bound by residues 20 to 26 and 48 to 50; these read GDEGKGK and GHT. Asp-21 acts as the Proton acceptor in catalysis. Mg(2+)-binding residues include Asp-21 and Gly-48. IMP is bound by residues 21-24, 46-49, Thr-137, Arg-151, Gln-232, Thr-247, and Arg-319; these read DEGK and NAGH. His-49 (proton donor) is an active-site residue. Substrate is bound at residue 315–321; it reads SVTGRPR. Residues Arg-321, 347 to 349, and 429 to 431 contribute to the GTP site; these read KLD and STG.

It belongs to the adenylosuccinate synthetase family. As to quaternary structure, homodimer. The cofactor is Mg(2+).

Its subcellular location is the cytoplasm. The catalysed reaction is IMP + L-aspartate + GTP = N(6)-(1,2-dicarboxyethyl)-AMP + GDP + phosphate + 2 H(+). The protein operates within purine metabolism; AMP biosynthesis via de novo pathway; AMP from IMP: step 1/2. Plays an important role in the de novo pathway of purine nucleotide biosynthesis. Catalyzes the first committed step in the biosynthesis of AMP from IMP. The sequence is that of Adenylosuccinate synthetase from Ralstonia nicotianae (strain ATCC BAA-1114 / GMI1000) (Ralstonia solanacearum).